Here is a 160-residue protein sequence, read N- to C-terminus: Transcription elongation factor GreA (160 aa).

Residues 50 to 70 adopt a coiled-coil conformation; the sequence is AAREQQSFNEGRIQELEAKLS.

This sequence belongs to the GreA/GreB family.

Functionally, necessary for efficient RNA polymerase transcription elongation past template-encoded arresting sites. The arresting sites in DNA have the property of trapping a certain fraction of elongating RNA polymerases that pass through, resulting in locked ternary complexes. Cleavage of the nascent transcript by cleavage factors such as GreA or GreB allows the resumption of elongation from the new 3'terminus. GreA releases sequences of 2 to 3 nucleotides. In Legionella pneumophila (strain Corby), this protein is Transcription elongation factor GreA.